A 446-amino-acid polypeptide reads, in one-letter code: tRNA-2-methylthio-N(6)-dimethylallyladenosine synthase (446 aa).

One can recognise an MTTase N-terminal domain in the interval 3-124; it reads KKLYIKTYGC…LPELISKVVR (122 aa). The [4Fe-4S] cluster site is built by C12, C48, C87, C162, C166, and C169. The region spanning 148-380 is the Radical SAM core domain; it reads YPQGASAFIS…QKELSSQQLA (233 aa). Positions 383-446 constitute a TRAM domain; the sequence is ESCVGSTMKV…SNSLTGEIYT (64 aa).

The protein belongs to the methylthiotransferase family. MiaB subfamily. Monomer. [4Fe-4S] cluster is required as a cofactor.

It is found in the cytoplasm. It catalyses the reaction N(6)-dimethylallyladenosine(37) in tRNA + (sulfur carrier)-SH + AH2 + 2 S-adenosyl-L-methionine = 2-methylsulfanyl-N(6)-dimethylallyladenosine(37) in tRNA + (sulfur carrier)-H + 5'-deoxyadenosine + L-methionine + A + S-adenosyl-L-homocysteine + 2 H(+). In terms of biological role, catalyzes the methylthiolation of N6-(dimethylallyl)adenosine (i(6)A), leading to the formation of 2-methylthio-N6-(dimethylallyl)adenosine (ms(2)i(6)A) at position 37 in tRNAs that read codons beginning with uridine. In Rickettsia canadensis (strain McKiel), this protein is tRNA-2-methylthio-N(6)-dimethylallyladenosine synthase.